Here is a 234-residue protein sequence, read N- to C-terminus: tRNA1(Val) (adenine(37)-N6)-methyltransferase (234 aa).

Belongs to the methyltransferase superfamily. tRNA (adenine-N(6)-)-methyltransferase family.

It localises to the cytoplasm. The catalysed reaction is adenosine(37) in tRNA1(Val) + S-adenosyl-L-methionine = N(6)-methyladenosine(37) in tRNA1(Val) + S-adenosyl-L-homocysteine + H(+). In terms of biological role, specifically methylates the adenine in position 37 of tRNA(1)(Val) (anticodon cmo5UAC). In Phocaeicola vulgatus (strain ATCC 8482 / DSM 1447 / JCM 5826 / CCUG 4940 / NBRC 14291 / NCTC 11154) (Bacteroides vulgatus), this protein is tRNA1(Val) (adenine(37)-N6)-methyltransferase.